The following is a 186-amino-acid chain: Ribosome-recycling factor (186 aa).

A disordered region spans residues glutamate 144–lysine 163.

This sequence belongs to the RRF family.

The protein localises to the cytoplasm. In terms of biological role, responsible for the release of ribosomes from messenger RNA at the termination of protein biosynthesis. May increase the efficiency of translation by recycling ribosomes from one round of translation to another. The chain is Ribosome-recycling factor from Rhizobium johnstonii (strain DSM 114642 / LMG 32736 / 3841) (Rhizobium leguminosarum bv. viciae).